The sequence spans 469 residues: Cell division protein FtsP (469 aa).

The segment at residues 1–29 (MPRLSRRQLLKTAAISTALSTVPAPLLAA) is a signal peptide (tat-type signal). The Plastocyanin-like domain maps to 228 to 286 (IRLRLLNASLARAYDLRLDNDQEMLLIAQDLSFLPKAKSVKSLVLSPGERAEILVNMNE).

Belongs to the FtsP family. Predicted to be exported by the Tat system. The position of the signal peptide cleavage has not been experimentally proven.

The protein resides in the periplasm. Functionally, cell division protein that is required for growth during stress conditions. May be involved in protecting or stabilizing the divisomal assembly under conditions of stress. The chain is Cell division protein FtsP from Haemophilus influenzae (strain 86-028NP).